Reading from the N-terminus, the 285-residue chain is Ribosomal RNA small subunit methyltransferase A (285 aa).

The S-adenosyl-L-methionine site is built by asparagine 11, leucine 13, glycine 37, glutamate 57, aspartate 85, and asparagine 105.

Belongs to the class I-like SAM-binding methyltransferase superfamily. rRNA adenine N(6)-methyltransferase family. RsmA subfamily.

The protein localises to the cytoplasm. It catalyses the reaction adenosine(1518)/adenosine(1519) in 16S rRNA + 4 S-adenosyl-L-methionine = N(6)-dimethyladenosine(1518)/N(6)-dimethyladenosine(1519) in 16S rRNA + 4 S-adenosyl-L-homocysteine + 4 H(+). Its function is as follows. Specifically dimethylates two adjacent adenosines (A1518 and A1519) in the loop of a conserved hairpin near the 3'-end of 16S rRNA in the 30S particle. May play a critical role in biogenesis of 30S subunits. This is Ribosomal RNA small subunit methyltransferase A from Campylobacter curvus (strain 525.92).